The sequence spans 445 residues: Glycine--tRNA ligase (445 aa).

The substrate site is built by Arg-97 and Glu-145. ATP contacts are provided by residues Arg-177–Glu-179, Phe-187–Phe-192, Glu-262–Val-263, and Gly-308–Arg-311. A substrate-binding site is contributed by Phe-192–Glu-196. Residue Glu-304–Gly-308 participates in substrate binding.

The protein belongs to the class-II aminoacyl-tRNA synthetase family. As to quaternary structure, homodimer.

Its subcellular location is the cytoplasm. It carries out the reaction tRNA(Gly) + glycine + ATP = glycyl-tRNA(Gly) + AMP + diphosphate. Its function is as follows. Catalyzes the attachment of glycine to tRNA(Gly). This is Glycine--tRNA ligase from Borreliella burgdorferi (strain ATCC 35210 / DSM 4680 / CIP 102532 / B31) (Borrelia burgdorferi).